Consider the following 154-residue polypeptide: Peptide deformylase (154 aa).

Residues Cys-90 and His-132 each coordinate Fe cation. Residue Glu-133 is part of the active site. A Fe cation-binding site is contributed by His-136.

This sequence belongs to the polypeptide deformylase family. The cofactor is Fe(2+).

The enzyme catalyses N-terminal N-formyl-L-methionyl-[peptide] + H2O = N-terminal L-methionyl-[peptide] + formate. Functionally, removes the formyl group from the N-terminal Met of newly synthesized proteins. Requires at least a dipeptide for an efficient rate of reaction. N-terminal L-methionine is a prerequisite for activity but the enzyme has broad specificity at other positions. The chain is Peptide deformylase from Halothermothrix orenii (strain H 168 / OCM 544 / DSM 9562).